Here is a 674-residue protein sequence, read N- to C-terminus: Zinc finger protein 750 (674 aa).

The CCHC-type zinc finger occupies 25-51; that stretch reads YKCFQCPFTCNEKSHLFNHMKYGLCKN. Residues Cys-27, Cys-30, His-43, and Cys-49 each contribute to the Zn(2+) site. Disordered stretches follow at residues 105-125, 370-466, and 594-674; these read EAKE…KTTV, LAKN…QSHS, and TSSP…PRVS. Composition is skewed to polar residues over residues 401 to 411 and 444 to 466; these read SPTNFTQSSQG and DSQT…QSHS.

The protein resides in the nucleus. Transcription factor involved in epidermis differentiation. The chain is Zinc finger protein 750 (znf750) from Xenopus laevis (African clawed frog).